A 160-amino-acid chain; its full sequence is SsrA-binding protein (160 aa).

This sequence belongs to the SmpB family.

Its subcellular location is the cytoplasm. Required for rescue of stalled ribosomes mediated by trans-translation. Binds to transfer-messenger RNA (tmRNA), required for stable association of tmRNA with ribosomes. tmRNA and SmpB together mimic tRNA shape, replacing the anticodon stem-loop with SmpB. tmRNA is encoded by the ssrA gene; the 2 termini fold to resemble tRNA(Ala) and it encodes a 'tag peptide', a short internal open reading frame. During trans-translation Ala-aminoacylated tmRNA acts like a tRNA, entering the A-site of stalled ribosomes, displacing the stalled mRNA. The ribosome then switches to translate the ORF on the tmRNA; the nascent peptide is terminated with the 'tag peptide' encoded by the tmRNA and targeted for degradation. The ribosome is freed to recommence translation, which seems to be the essential function of trans-translation. The sequence is that of SsrA-binding protein from Mycobacterium leprae (strain Br4923).